A 488-amino-acid polypeptide reads, in one-letter code: Glutamyl-tRNA(Gln) amidotransferase subunit A (488 aa).

Active-site charge relay system residues include K77 and S152. S176 functions as the Acyl-ester intermediate in the catalytic mechanism.

It belongs to the amidase family. GatA subfamily. Heterotrimer of A, B and C subunits.

The enzyme catalyses L-glutamyl-tRNA(Gln) + L-glutamine + ATP + H2O = L-glutaminyl-tRNA(Gln) + L-glutamate + ADP + phosphate + H(+). Functionally, allows the formation of correctly charged Gln-tRNA(Gln) through the transamidation of misacylated Glu-tRNA(Gln) in organisms which lack glutaminyl-tRNA synthetase. The reaction takes place in the presence of glutamine and ATP through an activated gamma-phospho-Glu-tRNA(Gln). The protein is Glutamyl-tRNA(Gln) amidotransferase subunit A of Streptococcus pyogenes serotype M28 (strain MGAS6180).